A 129-amino-acid polypeptide reads, in one-letter code: Cytochrome c oxidase subunit 5B, mitochondrial (129 aa).

Residues 1–31 (MASRLLRGAGALAAQALRARGPSGAAAVRSM) constitute a mitochondrion transit peptide. Residues Lys-68 and Lys-86 each carry the N6-acetyllysine modification. Zn(2+) is bound by residues Cys-91, Cys-93, Cys-113, and Cys-116. Lys-121 carries the post-translational modification N6-acetyllysine.

It belongs to the cytochrome c oxidase subunit 5B family. In terms of assembly, component of the cytochrome c oxidase (complex IV, CIV), a multisubunit enzyme composed of 14 subunits. The complex is composed of a catalytic core of 3 subunits MT-CO1, MT-CO2 and MT-CO3, encoded in the mitochondrial DNA, and 11 supernumerary subunits COX4I, COX5A, COX5B, COX6A, COX6B, COX6C, COX7A, COX7B, COX7C, COX8 and NDUFA4, which are encoded in the nuclear genome. The complex exists as a monomer or a dimer and forms supercomplexes (SCs) in the inner mitochondrial membrane with NADH-ubiquinone oxidoreductase (complex I, CI) and ubiquinol-cytochrome c oxidoreductase (cytochrome b-c1 complex, complex III, CIII), resulting in different assemblies (supercomplex SCI(1)III(2)IV(1) and megacomplex MCI(2)III(2)IV(2)).

It localises to the mitochondrion inner membrane. It functions in the pathway energy metabolism; oxidative phosphorylation. Component of the cytochrome c oxidase, the last enzyme in the mitochondrial electron transport chain which drives oxidative phosphorylation. The respiratory chain contains 3 multisubunit complexes succinate dehydrogenase (complex II, CII), ubiquinol-cytochrome c oxidoreductase (cytochrome b-c1 complex, complex III, CIII) and cytochrome c oxidase (complex IV, CIV), that cooperate to transfer electrons derived from NADH and succinate to molecular oxygen, creating an electrochemical gradient over the inner membrane that drives transmembrane transport and the ATP synthase. Cytochrome c oxidase is the component of the respiratory chain that catalyzes the reduction of oxygen to water. Electrons originating from reduced cytochrome c in the intermembrane space (IMS) are transferred via the dinuclear copper A center (CU(A)) of subunit 2 and heme A of subunit 1 to the active site in subunit 1, a binuclear center (BNC) formed by heme A3 and copper B (CU(B)). The BNC reduces molecular oxygen to 2 water molecules using 4 electrons from cytochrome c in the IMS and 4 protons from the mitochondrial matrix. The polypeptide is Cytochrome c oxidase subunit 5B, mitochondrial (COX5B) (Pongo abelii (Sumatran orangutan)).